The sequence spans 353 residues: MNGTEGPYFYIPMVNTTGIVRSPYEYPQYYLVNPAAYAALGAYMFLLILVGFPVNFLTLYVTLEHKKLRTPLNYILLNLAVADLFMVLGGFTTTMYTSMHGYFVLGRLGCNVEGFFATLGGEIALWSLVVLAIERWVVVCKPISNFRFSEDHAIMGLAFTWVMASACAVPPLVGWSRYIPEGMQCSCGIDYYTRAEGFNNESFVIYMFVCHFLIPLVVVFFCYGRLLCAVKEAAAAQQESETTQRAEREVSRMVVIMVVAFLVCWCPYAGVAWYIFTHQGSEFGPLFMTFPAFFAKSSSIYNPMIYICMNKQFRHCMITTLCCGKNPFEEEEGASTTSKTEASSVSSSSVSPA.

The Extracellular portion of the chain corresponds to 1–36 (MNGTEGPYFYIPMVNTTGIVRSPYEYPQYYLVNPAA). 2 N-linked (GlcNAc...) asparagine glycosylation sites follow: N2 and N15. Residues 37–61 (YAALGAYMFLLILVGFPVNFLTLYV) form a helical membrane-spanning segment. The Cytoplasmic portion of the chain corresponds to 62–73 (TLEHKKLRTPLN). Residues 74–96 (YILLNLAVADLFMVLGGFTTTMY) traverse the membrane as a helical segment. At 97 to 110 (TSMHGYFVLGRLGC) the chain is on the extracellular side. A disulfide bridge connects residues C110 and C187. Residues 111-133 (NVEGFFATLGGEIALWSLVVLAI) traverse the membrane as a helical segment. Positions 134–136 (ERW) match the 'Ionic lock' involved in activated form stabilization motif. Over 134 to 152 (ERWVVVCKPISNFRFSEDH) the chain is Cytoplasmic. A helical membrane pass occupies residues 153 to 173 (AIMGLAFTWVMASACAVPPLV). The Extracellular portion of the chain corresponds to 174-202 (GWSRYIPEGMQCSCGIDYYTRAEGFNNES). The N-linked (GlcNAc...) asparagine glycan is linked to N200. The helical transmembrane segment at 203–224 (FVIYMFVCHFLIPLVVVFFCYG) threads the bilayer. The Cytoplasmic portion of the chain corresponds to 225-252 (RLLCAVKEAAAAQQESETTQRAEREVSR). Residues 253 to 274 (MVVIMVVAFLVCWCPYAGVAWY) form a helical membrane-spanning segment. Topologically, residues 275 to 286 (IFTHQGSEFGPL) are extracellular. The helical transmembrane segment at 287-308 (FMTFPAFFAKSSSIYNPMIYIC) threads the bilayer. At K296 the chain carries N6-(retinylidene)lysine. Residues 309–353 (MNKQFRHCMITTLCCGKNPFEEEEGASTTSKTEASSVSSSSVSPA) lie on the Cytoplasmic side of the membrane. 2 S-palmitoyl cysteine lipidation sites follow: C322 and C323. Residues 330–353 (EEEGASTTSKTEASSVSSSSVSPA) form a disordered region. Residues 334 to 353 (ASTTSKTEASSVSSSSVSPA) are compositionally biased toward low complexity.

It belongs to the G-protein coupled receptor 1 family. Opsin subfamily. In terms of processing, phosphorylated on some or all of the serine and threonine residues present in the C-terminal region. Post-translationally, contains one covalently linked retinal chromophore.

Its subcellular location is the membrane. The protein localises to the cell projection. It is found in the cilium. It localises to the photoreceptor outer segment. Functionally, photoreceptor required for image-forming vision at low light intensity. While most salt water fish species use retinal as chromophore, most freshwater fish use 3-dehydroretinal, or a mixture of retinal and 3-dehydroretinal. Light-induced isomerization of 11-cis to all-trans retinal triggers a conformational change that activates signaling via G-proteins. Subsequent receptor phosphorylation mediates displacement of the bound G-protein alpha subunit by arrestin and terminates signaling. The chain is Rhodopsin (rho) from Chelon labrosus (Thicklip grey mullet).